Here is a 363-residue protein sequence, read N- to C-terminus: Nucleoporin SEH1 (363 aa).

6 WD repeats span residues 15 to 54 (AHRDLIHCVSFDPHGRRMATCASDMTMAIWDRKPDGNWRR), 60 to 101 (CHGG…SEKD), 108 to 149 (QWIR…RIYE), 158 to 206 (RWNL…VIYE), 223 to 264 (DLPC…SAIL), and 287 to 326 (GDHRKAWRLRYNLMGSVISSTSLDGTLRSWKSLFVNQWVK).

The protein belongs to the WD repeat SEC13 family. In terms of assembly, component of the nuclear pore complex (NPC). Probably part of the GATOR complex.

It is found in the nucleus. The protein resides in the nuclear pore complex. Its subcellular location is the lysosome membrane. The protein localises to the nucleus envelope. Its function is as follows. Probable component of the nuclear pore complex (NPC) which is involved in the trafficking of macromolecules between the cytoplasm and nucleus. As a component of the GATOR complex may function in the amino acid-sensing branch of the TORC1 signaling pathway. The protein is Nucleoporin SEH1 of Caenorhabditis elegans.